The following is a 120-amino-acid chain: NAD(P)H-quinone oxidoreductase subunit 3, chloroplastic (120 aa).

The next 3 membrane-spanning stretches (helical) occupy residues 10–30 (FWAF…TSSL), 64–84 (MFAL…PWAM), and 89–109 (LGVL…IGLV).

It belongs to the complex I subunit 3 family. In terms of assembly, NDH is composed of at least 16 different subunits, 5 of which are encoded in the nucleus.

It is found in the plastid. Its subcellular location is the chloroplast thylakoid membrane. It catalyses the reaction a plastoquinone + NADH + (n+1) H(+)(in) = a plastoquinol + NAD(+) + n H(+)(out). The enzyme catalyses a plastoquinone + NADPH + (n+1) H(+)(in) = a plastoquinol + NADP(+) + n H(+)(out). NDH shuttles electrons from NAD(P)H:plastoquinone, via FMN and iron-sulfur (Fe-S) centers, to quinones in the photosynthetic chain and possibly in a chloroplast respiratory chain. The immediate electron acceptor for the enzyme in this species is believed to be plastoquinone. Couples the redox reaction to proton translocation, and thus conserves the redox energy in a proton gradient. This is NAD(P)H-quinone oxidoreductase subunit 3, chloroplastic from Zygnema circumcarinatum (Green alga).